Reading from the N-terminus, the 152-residue chain is UPF0225 protein KPK_2103 (152 aa).

The protein belongs to the UPF0225 family.

The polypeptide is UPF0225 protein KPK_2103 (Klebsiella pneumoniae (strain 342)).